Here is a 214-residue protein sequence, read N- to C-terminus: Ribosomal RNA small subunit methyltransferase G (214 aa).

S-adenosyl-L-methionine is bound by residues Gly-77, Leu-82, 128–129 (VE), and Arg-143.

Belongs to the methyltransferase superfamily. RNA methyltransferase RsmG family.

The protein localises to the cytoplasm. It carries out the reaction guanosine(527) in 16S rRNA + S-adenosyl-L-methionine = N(7)-methylguanosine(527) in 16S rRNA + S-adenosyl-L-homocysteine. Its function is as follows. Specifically methylates the N7 position of guanine in position 527 of 16S rRNA. This Nitrosococcus oceani (strain ATCC 19707 / BCRC 17464 / JCM 30415 / NCIMB 11848 / C-107) protein is Ribosomal RNA small subunit methyltransferase G.